Reading from the N-terminus, the 453-residue chain is 3-phosphoshikimate 1-carboxyvinyltransferase (453 aa).

Positions 28, 29, and 33 each coordinate 3-phosphoshikimate. Residue lysine 28 coordinates phosphoenolpyruvate. Residues glycine 101 and arginine 129 each coordinate phosphoenolpyruvate. 3-phosphoshikimate-binding residues include serine 174, glutamine 176, aspartate 326, and lysine 353. Residue glutamine 176 participates in phosphoenolpyruvate binding. Catalysis depends on aspartate 326, which acts as the Proton acceptor. Phosphoenolpyruvate contacts are provided by arginine 357 and arginine 405.

The protein belongs to the EPSP synthase family. In terms of assembly, monomer.

It is found in the cytoplasm. The catalysed reaction is 3-phosphoshikimate + phosphoenolpyruvate = 5-O-(1-carboxyvinyl)-3-phosphoshikimate + phosphate. It functions in the pathway metabolic intermediate biosynthesis; chorismate biosynthesis; chorismate from D-erythrose 4-phosphate and phosphoenolpyruvate: step 6/7. In terms of biological role, catalyzes the transfer of the enolpyruvyl moiety of phosphoenolpyruvate (PEP) to the 5-hydroxyl of shikimate-3-phosphate (S3P) to produce enolpyruvyl shikimate-3-phosphate and inorganic phosphate. This chain is 3-phosphoshikimate 1-carboxyvinyltransferase, found in Zymomonas mobilis subsp. mobilis (strain ATCC 31821 / ZM4 / CP4).